The following is a 363-amino-acid chain: NAD(P)H-quinone oxidoreductase subunit 1, chloroplastic (363 aa).

6 helical membrane passes run 28–48 (WVLV…LVIV), 98–118 (FSIG…VIPF), 127–147 (LPIG…GLLM), 248–268 (YSGI…LVSS), 300–320 (VFGM…FLFI), and 343–363 (FLLP…LFSL).

It belongs to the complex I subunit 1 family. As to quaternary structure, NDH is composed of at least 16 different subunits, 5 of which are encoded in the nucleus.

Its subcellular location is the plastid. It localises to the chloroplast thylakoid membrane. It catalyses the reaction a plastoquinone + NADH + (n+1) H(+)(in) = a plastoquinol + NAD(+) + n H(+)(out). The catalysed reaction is a plastoquinone + NADPH + (n+1) H(+)(in) = a plastoquinol + NADP(+) + n H(+)(out). In terms of biological role, NDH shuttles electrons from NAD(P)H:plastoquinone, via FMN and iron-sulfur (Fe-S) centers, to quinones in the photosynthetic chain and possibly in a chloroplast respiratory chain. The immediate electron acceptor for the enzyme in this species is believed to be plastoquinone. Couples the redox reaction to proton translocation, and thus conserves the redox energy in a proton gradient. The chain is NAD(P)H-quinone oxidoreductase subunit 1, chloroplastic from Cucumis sativus (Cucumber).